Reading from the N-terminus, the 359-residue chain is Phosphoserine aminotransferase (359 aa).

Arg41 contacts L-glutamate. Pyridoxal 5'-phosphate-binding positions include 75–76, Trp101, Thr152, Asp171, and Gln194; that span reads AS. Lys195 is modified (N6-(pyridoxal phosphate)lysine). 236–237 is a pyridoxal 5'-phosphate binding site; that stretch reads NT.

This sequence belongs to the class-V pyridoxal-phosphate-dependent aminotransferase family. SerC subfamily. Homodimer. It depends on pyridoxal 5'-phosphate as a cofactor.

It localises to the cytoplasm. It catalyses the reaction O-phospho-L-serine + 2-oxoglutarate = 3-phosphooxypyruvate + L-glutamate. The catalysed reaction is 4-(phosphooxy)-L-threonine + 2-oxoglutarate = (R)-3-hydroxy-2-oxo-4-phosphooxybutanoate + L-glutamate. The protein operates within amino-acid biosynthesis; L-serine biosynthesis; L-serine from 3-phospho-D-glycerate: step 2/3. It functions in the pathway cofactor biosynthesis; pyridoxine 5'-phosphate biosynthesis; pyridoxine 5'-phosphate from D-erythrose 4-phosphate: step 3/5. In terms of biological role, catalyzes the reversible conversion of 3-phosphohydroxypyruvate to phosphoserine and of 3-hydroxy-2-oxo-4-phosphonooxybutanoate to phosphohydroxythreonine. This is Phosphoserine aminotransferase from Acinetobacter baumannii (strain AB307-0294).